Consider the following 124-residue polypeptide: Small ribosomal subunit protein uS12 (124 aa).

Position 89 is a 3-methylthioaspartic acid (D89). Residues 105-124 are disordered; it reads QGVKNRKQARSKYGAKMEKK.

Belongs to the universal ribosomal protein uS12 family. As to quaternary structure, part of the 30S ribosomal subunit. Contacts proteins S8 and S17. May interact with IF1 in the 30S initiation complex.

Functionally, with S4 and S5 plays an important role in translational accuracy. In terms of biological role, interacts with and stabilizes bases of the 16S rRNA that are involved in tRNA selection in the A site and with the mRNA backbone. Located at the interface of the 30S and 50S subunits, it traverses the body of the 30S subunit contacting proteins on the other side and probably holding the rRNA structure together. The combined cluster of proteins S8, S12 and S17 appears to hold together the shoulder and platform of the 30S subunit. This chain is Small ribosomal subunit protein uS12, found in Renibacterium salmoninarum (strain ATCC 33209 / DSM 20767 / JCM 11484 / NBRC 15589 / NCIMB 2235).